We begin with the raw amino-acid sequence, 542 residues long: Chaperonin GroEL (542 aa).

Residues 29 to 32 (TLGP), K50, 86 to 90 (DGTTT), G413, 477 to 479 (NAA), and D493 each bind ATP.

This sequence belongs to the chaperonin (HSP60) family. Forms a cylinder of 14 subunits composed of two heptameric rings stacked back-to-back. Interacts with the co-chaperonin GroES.

The protein resides in the cytoplasm. The enzyme catalyses ATP + H2O + a folded polypeptide = ADP + phosphate + an unfolded polypeptide.. In terms of biological role, together with its co-chaperonin GroES, plays an essential role in assisting protein folding. The GroEL-GroES system forms a nano-cage that allows encapsulation of the non-native substrate proteins and provides a physical environment optimized to promote and accelerate protein folding. This is Chaperonin GroEL from Solibacter usitatus (strain Ellin6076).